We begin with the raw amino-acid sequence, 728 residues long: Putative ankyrin repeat protein L271 (728 aa).

ANK repeat units follow at residues 142 to 171 and 173 to 198; these read SDVNVIYWTSKQNYIDATKYLISIGANIKT and IYSASKFGNLDLIISIIDGKNKDIIL. Residues 244–267 are compositionally biased toward low complexity; the sequence is STKSTKSSGSPKSIKPKKSNQNNN. Residues 244–271 are disordered; that stretch reads STKSTKSSGSPKSIKPKKSNQNNNAKIN. Positions 292–338 form a coiled coil; sequence TVDKMSSAKEQALNVYKEIENMENFILNKINITKKKALDKIKEIENI. 8 ANK repeats span residues 358-383, 384-414, 477-510, 514-543, 547-576, 594-626, 630-659, and 663-696; these read TNTDTITQAIISENLNSLDLLIRQGY, DINKILYLACINNKKNVIDYLIDNKGANYEQ, DDLSPIMVACRASKNDDQLDLVKMLVSYGFNINS, IGRSALHYAVNGSNRKIIEYLLALGADYSF, NGDTPMMLAKKSNNLELLDLFQSVPKDTKT, DIKTAMSICLSSINDNQFESVQKLIMSGFNVSS, TKKTLLHMAVVNNNLRIVELLINSGININS, and LGKTPLMLACQYSHRDSKLAIVEFLLNNNAKILI.

This is Putative ankyrin repeat protein L271 from Acanthamoeba polyphaga (Amoeba).